Reading from the N-terminus, the 248-residue chain is 4-hydroxy-tetrahydrodipicolinate reductase (248 aa).

Residues 9–14 (GAKGRV), 77–79 (GTT), and 104–107 (APNF) contribute to the NAD(+) site. The Proton donor/acceptor role is filled by H134. Residue H135 participates in (S)-2,3,4,5-tetrahydrodipicolinate binding. The Proton donor role is filled by K138. 144–145 (GT) provides a ligand contact to (S)-2,3,4,5-tetrahydrodipicolinate.

Belongs to the DapB family.

The protein resides in the cytoplasm. The enzyme catalyses (S)-2,3,4,5-tetrahydrodipicolinate + NAD(+) + H2O = (2S,4S)-4-hydroxy-2,3,4,5-tetrahydrodipicolinate + NADH + H(+). The catalysed reaction is (S)-2,3,4,5-tetrahydrodipicolinate + NADP(+) + H2O = (2S,4S)-4-hydroxy-2,3,4,5-tetrahydrodipicolinate + NADPH + H(+). It functions in the pathway amino-acid biosynthesis; L-lysine biosynthesis via DAP pathway; (S)-tetrahydrodipicolinate from L-aspartate: step 4/4. In terms of biological role, catalyzes the conversion of 4-hydroxy-tetrahydrodipicolinate (HTPA) to tetrahydrodipicolinate. In Corynebacterium glutamicum (strain R), this protein is 4-hydroxy-tetrahydrodipicolinate reductase.